A 426-amino-acid polypeptide reads, in one-letter code: Serine hydroxymethyltransferase (426 aa).

(6S)-5,6,7,8-tetrahydrofolate-binding positions include Leu113 and 117 to 119 (GHL). Lys222 carries the post-translational modification N6-(pyridoxal phosphate)lysine. 363-365 (SAF) is a (6S)-5,6,7,8-tetrahydrofolate binding site.

The protein belongs to the SHMT family. As to quaternary structure, homodimer. Pyridoxal 5'-phosphate serves as cofactor.

The protein localises to the cytoplasm. It carries out the reaction (6R)-5,10-methylene-5,6,7,8-tetrahydrofolate + glycine + H2O = (6S)-5,6,7,8-tetrahydrofolate + L-serine. It participates in one-carbon metabolism; tetrahydrofolate interconversion. It functions in the pathway amino-acid biosynthesis; glycine biosynthesis; glycine from L-serine: step 1/1. Its function is as follows. Catalyzes the reversible interconversion of serine and glycine with tetrahydrofolate (THF) serving as the one-carbon carrier. This reaction serves as the major source of one-carbon groups required for the biosynthesis of purines, thymidylate, methionine, and other important biomolecules. Also exhibits THF-independent aldolase activity toward beta-hydroxyamino acids, producing glycine and aldehydes, via a retro-aldol mechanism. In Bacteroides thetaiotaomicron (strain ATCC 29148 / DSM 2079 / JCM 5827 / CCUG 10774 / NCTC 10582 / VPI-5482 / E50), this protein is Serine hydroxymethyltransferase.